Here is a 381-residue protein sequence, read N- to C-terminus: GDP-mannose-dependent alpha-(1-6)-phosphatidylinositol dimannoside mannosyltransferase (381 aa).

Substrate contacts are provided by residues glycine 16, arginine 207, 211-212 (EK), 283-287 (ETFGL), and glutamate 291.

It belongs to the glycosyltransferase group 1 family. Glycosyltransferase 4 subfamily.

It functions in the pathway phospholipid metabolism; phosphatidylinositol metabolism. Functionally, catalyzes the addition of a mannose residue from GDP-D-mannose to the position 6 of the alpha-1,6-linked mannose residue of the triacyl phosphatidylinositol dimannoside (Ac3PIM2) to generate triacyl phosphatidylinositol trimannoside (Ac3PIM3). This chain is GDP-mannose-dependent alpha-(1-6)-phosphatidylinositol dimannoside mannosyltransferase (pimC), found in Mycobacterium tuberculosis (strain ATCC 25177 / H37Ra).